Consider the following 583-residue polypeptide: Lipoprotein LpqB (583 aa).

An N-terminal signal peptide occupies residues 1–29 (MSNKTTEATKTTKVKKVLSVVAGLGLLAG). Cys30 is lipidated: N-palmitoyl cysteine. A lipid anchor (S-diacylglycerol cysteine) is attached at Cys30. The tract at residues 38 to 63 (NPEAISSYAPAPSGQEAPTPTDGQPS) is disordered.

The protein belongs to the LpqB lipoprotein family.

It localises to the cell membrane. The sequence is that of Lipoprotein LpqB from Corynebacterium jeikeium (strain K411).